The chain runs to 197 residues: HTH-type transcriptional repressor BdcR (197 aa).

The 61-residue stretch at 15–75 folds into the HTH tetR-type domain; the sequence is RFAPEQAISA…RVLNEYVGTE (61 aa). A DNA-binding region (H-T-H motif) is located at residues 38-57; sequence SVAEVTDYLGINPPSLYAAF.

Negatively regulates expression of bdcA. The chain is HTH-type transcriptional repressor BdcR (bdcR) from Escherichia coli (strain K12).